Consider the following 33-residue polypeptide: Cytochrome c oxidase subunit 5B liver, mitochondrial (33 aa).

This sequence belongs to the cytochrome c oxidase subunit 5B family. In terms of assembly, component of the cytochrome c oxidase (complex IV, CIV), a multisubunit enzyme composed of 14 subunits. The complex is composed of a catalytic core of 3 subunits MT-CO1, MT-CO2 and MT-CO3, encoded in the mitochondrial DNA, and 11 supernumerary subunits COX4I, COX5A, COX5B, COX6A, COX6B, COX6C, COX7A, COX7B, COX7C, COX8 and NDUFA4, which are encoded in the nuclear genome. The complex exists as a monomer or a dimer and forms supercomplexes (SCs) in the inner mitochondrial membrane with NADH-ubiquinone oxidoreductase (complex I, CI) and ubiquinol-cytochrome c oxidoreductase (cytochrome b-c1 complex, complex III, CIII), resulting in different assemblies (supercomplex SCI(1)III(2)IV(1) and megacomplex MCI(2)III(2)IV(2)).

It is found in the mitochondrion inner membrane. Its pathway is energy metabolism; oxidative phosphorylation. In terms of biological role, component of the cytochrome c oxidase, the last enzyme in the mitochondrial electron transport chain which drives oxidative phosphorylation. The respiratory chain contains 3 multisubunit complexes succinate dehydrogenase (complex II, CII), ubiquinol-cytochrome c oxidoreductase (cytochrome b-c1 complex, complex III, CIII) and cytochrome c oxidase (complex IV, CIV), that cooperate to transfer electrons derived from NADH and succinate to molecular oxygen, creating an electrochemical gradient over the inner membrane that drives transmembrane transport and the ATP synthase. Cytochrome c oxidase is the component of the respiratory chain that catalyzes the reduction of oxygen to water. Electrons originating from reduced cytochrome c in the intermembrane space (IMS) are transferred via the dinuclear copper A center (CU(A)) of subunit 2 and heme A of subunit 1 to the active site in subunit 1, a binuclear center (BNC) formed by heme A3 and copper B (CU(B)). The BNC reduces molecular oxygen to 2 water molecules using 4 electrons from cytochrome c in the IMS and 4 protons from the mitochondrial matrix. In Oncorhynchus mykiss (Rainbow trout), this protein is Cytochrome c oxidase subunit 5B liver, mitochondrial.